The following is a 1029-amino-acid chain: Protein STABILIZED1 (1029 aa).

Residues 1 to 85 (MVFLSIPNGK…VIIHVLLLGG (85 aa)) form the Ubiquitin-like domain. G85 is covalently cross-linked (Glycyl lysine isopeptide (Gly-Lys) (interchain with K-? in acceptor proteins)). The disordered stretch occupies residues 142–170 (AAPGVGRGAGKPSEAEAEDDEEAEEKRYD). Positions 210 to 243 (DSRRKDRREAKLKEEIEKYRASNPKITEQFADLK) form a coiled coil. HAT repeat units lie at residues 367-399 (YDRN…VEEV), 401-431 (GKIK…CRLA), 432-462 (NPED…KLEH), 463-494 (DVEN…LANE), 496-524 (DARI…LETY), 526-554 (ESKK…LEEA), 639-671 (GSIE…LEKS), 673-705 (GSRE…EKWL), 707-739 (GDVP…LEFE), 741-772 (KEPE…VERE), 774-806 (GNVE…LEER), 808-840 (KHLE…LEEK), 842-874 (NGLN…AELR), 876-908 (DNKR…MAPR), and 940-972 (KKVE…FELQ). One copy of the TPR 1 repeat lies at 625-658 (KRTWVADADECKKRGSIETARAIYAHALSVFLTK). A TPR 2 repeat occupies 794–827 (FKLWLMLGQLEERFKHLEQARKAYDTGLKHCPHC). Residues 926-959 (PHVTIAVAKLFWQDKKVEKARAWFERAVTVGPDI) form a TPR 3 repeat.

As to quaternary structure, component of a pre-mRNA splicing complex. Interacts with ZOP1. Interacts with PRP31. In terms of tissue distribution, ubiquitous.

Its subcellular location is the nucleus. The protein resides in the cajal body. Pre-mRNA splicing factor required for splicing and for the turnover of unstable transcripts. May be a U5 snRNP-associated protein involved in the formation of U4/U6-U5 tri-snRNP. Involved in responses to abiotic stresses. Involved in microRNAs (miRNAs) biogenesis by functioning in primary miRNAs (pri-miRNAs) splicing. Required for DNA methylation and transcriptional silencing through the RNA-directed DNA methylation (RdDM) pathway. This chain is Protein STABILIZED1 (STA1), found in Arabidopsis thaliana (Mouse-ear cress).